The chain runs to 85 residues: Probable weak neurotoxin 3FTx-Lio1 (85 aa).

An N-terminal signal peptide occupies residues 1 to 18; the sequence is MKAVILSLVAAFLYSGYT. Cystine bridges form between cysteine 21–cysteine 42, cysteine 24–cysteine 29, cysteine 35–cysteine 60, cysteine 64–cysteine 75, and cysteine 76–cysteine 81.

The protein belongs to the three-finger toxin family. Ancestral subfamily. In terms of tissue distribution, expressed by the venom gland.

Its subcellular location is the secreted. The polypeptide is Probable weak neurotoxin 3FTx-Lio1 (Erythrolamprus poecilogyrus (Water snake)).